The chain runs to 1040 residues: MGEEGGSVSHDEEERASVLLGHSLGCEMCSQEAFQAQRSQLVELLVSGSLEGFESVLDWLLSWEVLSWEDYEGFHLLGQPLSHLARRLLDTVWNKGTWACQKLIAAAQEAQADSQSPKLHGCWDPHSLHPARDLQSHRPAIVRRLHNHVENMLDLAWERGFVSQYECDEIRLPIFTPSQRARRLLDLATVKANGLAAFLLQHVQELPVPLALPLEAATCKKYMAKLRTTVSAQSRFLSTYDGAETLCLEDIYTENVLEVWADVGMAGPPQKSPATLGLEELFSTPGHLNDDADTVLVVGEAGSGKSTLLQRLHLLWAAGRDFQEFLFVFPFSCRQLQCMAKPLSVRTLLFEHCCWPDVGQEDIFQLLLDHPDRVLLTFDGFDEFKFRFTDRERHCSPTDPTSVQTLLFNLLQGNLLKNARKVVTSRPAAVSAFLRKYIRTEFNLKGFSEQGIELYLRKRHREPGVADRLIRLLQATSALHGLCHLPVFSWMVSKCHQELLLQEGGSPKTTTDMYLLILQHFLLHATPPDSASQGLGPSLLRGRLPTLLHLGRLALWGLGMCCYVFSAQQLQAAQVSPDDISLGFLVRAKGVVPGSTAPLEFLHITFQCFFAAFYLALSADVPPALLRHLFNCGRPGNSPMARLLPTMCIQGSEGKDSSVAALLQKAEPHNLQITAAFLAGLLSREHWGLLAECQTSEKALLRRQACARWCLARSLRKHFHSIPPAAPGEAKSVHAMPGFIWLIRSLYEMQEERLARKAARGLNVGHLKLTFCSVGPAECAALAFVLQHLRRPVALQLDYNSVGDIGVEQLLPCLGVCKALYLRDNNISDRGICKLIECALHCEQLQKLALFNNKLTDGCAHSMAKLLACRQNFLALRLGNNYITAAGAQVLAQGLRGNTSLQFLGFWGNRVGDEGAQALAEALGDHQSLRWLSLVGNNIGSVGAQALALMLAKNVMLEELCLEENHLQDEGVCSLAEGLKKNSSLKILKLSNNCITYLGAEALLQALERNDTILEVWLRGNTFSLEEVDKLGCRDTRLLL.

CARD domains lie at 26 to 122 and 126 to 218; these read CEMC…LHGC and HSLH…EAAT. Residues 63–77 carry the ATG16L1-binding motif motif; that stretch reads WEVLSWEDYEGFHLL. ADP-binding residues include threonine 239, tyrosine 252, threonine 253, glycine 302, serine 303, glycine 304, lysine 305, serine 306, and threonine 307. The segment at 241–274 is required for CARD9 binding; sequence DGAETLCLEDIYTENVLEVWADVGMAGPPQKSPA. The NACHT domain occupies 293–618; sequence DTVLVVGEAG…FFAAFYLALS (326 aa). 299 to 306 contacts ATP; that stretch reads GEAGSGKS. Cysteine 395 carries S-palmitoyl cysteine lipidation. An ADP-binding site is contributed by histidine 603. LRR repeat units follow at residues 791–812, 816–839, 844–865, 872–884, 900–920, 928–949, 956–976, 984–1005, and 1012–1032; these read RPVA…QLLP, VCKA…IECA, QLQK…SMAK, NFLA…NYIT, SLQF…QALA, SLRW…ALAL, MLEE…CSLA, SLKI…ALLQ, and TILE…DKLG. Residue cysteine 1033 is the site of S-palmitoyl cysteine attachment.

The protein belongs to the NOD1-NOD2 family. Homooligomer: homooligomerizes following muramyl dipeptide (MDP)-binding, promoting RIPK2 recruitment. Interacts (via CARD domain) with RIPK2 (via CARD domain). Following RIPK2 recruitment, RIPK2 homooligomerizes via its CARD domain and forms long filaments named RIPosomes. Interacts (via CARD domain) with ubiquitin; inhibiting interaction with RIPK2. Component of a signaling complex consisting of ARHGEF2, NOD2 and RIPK2. Interacts with ANKRD17 (via N-terminus). Interacts with HSPA1A; the interaction enhances NOD2 stability. Interacts (via both CARD domains) with HSP90; the interaction enhances NOD2 stability. Interacts (via CARD domain) with SOCS3; the interaction promotes NOD2 degradation. Interacts (via CARD domain) with ERBIN; the interaction inhibits activation of NOD2. Interacts with MAPKBP1; the interaction is enhanced in the presence of muramyl dipeptide (MDP) and inhibits NOD2 homooligomerization and activation. Interacts with INAVA; the interaction takes place upon Pattern recognition receptor (PRR) stimulation. Interacts (via NACHT domain) with CARD9. Interacts (via CARD domain) with CASP1; this interaction leads to IL1B processing. Also interacts with CASP4. Interacts with NLRP1; this interaction is enhanced in the presence of muramyl dipeptide (MDP) and leads to increased IL1B release. Interacts with NLRP12; this interaction promotes degradation of NOD2 through the ubiquitin-proteasome pathway. Interacts with ANKHD1, C10orf67, CHMP5, DOCK7, ENTR1, KRT15, LDOC1, PPP1R12C, PPP2R3B, TRIM41 and VIM. Interacts with MAVS; interaction takes place following single-stranded RNA (ssRNA)-binding. Interacts with ATG16L1. Interacts with IRGM; promoting IRGM 'Lys-63'-linked polyubiquitination, which is required for interactions with the core autophagy factors. In terms of processing, palmitoylated by ZDHHC5; palmitoylation is required for proper recruitment to the bacterial entry site and hence for proper signaling upon cognate peptidoglycan detection. Palmitoylation promotes localization to the cell membrane. Palmitoylation protects from SQSTM1/p62-dependent autophagic degradation. Polyubiquitinated by TRIM27, leading to proteasome-mediated degradation. Polyubiquitinated and degraded following muramyl dipeptide (MDP) stimulation, conferring MDP tolerance and preventing septic shock. Post-translationally, degraded via selective autophagy following interaction with IRGM. IRGM promotes NOD2-RIPK2 RIPosome recruitment to autophagosome membranes, promoting their SQSTM1/p62-dependent autophagic degradation. In terms of processing, O-glycosylated by OGT, O-GlcNAcylation increases protein stability.

Its subcellular location is the cell membrane. The protein resides in the basolateral cell membrane. The protein localises to the cytoplasm. It localises to the mitochondrion. ADP-binding promotes an inactive closed conformation. Its function is as follows. Pattern recognition receptor (PRR) that detects bacterial peptidoglycan fragments and other danger signals and plays an important role in gastrointestinal immunity. Specifically activated by muramyl dipeptide (MDP), a fragment of bacterial peptidoglycan found in every bacterial peptidoglycan type. NOD2 specifically recognizes and binds 6-O-phospho-MDP, the phosphorylated form of MDP, which is generated by NAGK. 6-O-phospho-MDP-binding triggers oligomerization that facilitates the binding and subsequent activation of the proximal adapter receptor-interacting RIPK2. Following recruitment, RIPK2 undergoes 'Met-1'- (linear) and 'Lys-63'-linked polyubiquitination by E3 ubiquitin-protein ligases XIAP, BIRC2, BIRC3 and the LUBAC complex, becoming a scaffolding protein for downstream effectors, triggering activation of the NF-kappa-B and MAP kinases signaling. This in turn leads to the transcriptional activation of hundreds of genes involved in immune response. Its ability to detect bacterial MDP plays a central role in maintaining the equilibrium between intestinal microbiota and host immune responses to control inflammation. An imbalance in this relationship results in dysbiosis, whereby pathogenic bacteria prevail on commensals, causing damage in the intestinal epithelial barrier as well as allowing bacterial invasion and inflammation. Acts as a regulator of appetite by sensing MDP in a subset of brain neurons: microbiota-derived MDP reach the brain, where they bind and activate NOD2 in inhibitory hypothalamic neurons, decreasing neuronal activity, thereby regulating satiety and body temperature. NOD2-dependent MDP-sensing of bacterial cell walls in the intestinal epithelial compartment contributes to sustained postnatal growth upon undernutrition. Also plays a role in antiviral response by acting as a sensor of single-stranded RNA (ssRNA) from viruses: upon ssRNA-binding, interacts with MAVS, leading to activation of interferon regulatory factor-3/IRF3 and expression of type I interferon. Also acts as a regulator of autophagy in dendritic cells via its interaction with ATG16L1, possibly by recruiting ATG16L1 at the site of bacterial entry. NOD2 activation in the small intestine crypt also contributes to intestinal stem cells survival and function: acts by promoting mitophagy via its association with ATG16L1. In addition to its main role in innate immunity, also regulates the adaptive immune system by acting as regulator of helper T-cell and regulatory T-cells (Tregs). Besides recognizing pathogens, also involved in the endoplasmic reticulum stress response: acts by sensing and binding to the cytosolic metabolite sphingosine-1-phosphate generated in response to endoplasmic reticulum stress, initiating an inflammation process that leads to activation of the NF-kappa-B and MAP kinases signaling. May also be involved in NLRP1 activation following activation by MDP, leading to CASP1 activation and IL1B release in macrophages. The sequence is that of Nucleotide-binding oligomerization domain-containing protein 2 (NOD2) from Pan troglodytes (Chimpanzee).